Reading from the N-terminus, the 207-residue chain is Na(+)-translocating NADH-quinone reductase subunit D (207 aa).

A run of 6 helical transmembrane segments spans residues 20-40 (IALQ…LQTA), 41-61 (FVMA…ISMI), 69-89 (IRII…DQIL), 102-122 (VFVG…AFAM), 130-150 (FVDG…VAFL), and 177-197 (NGLF…IWAI).

Belongs to the NqrDE/RnfAE family. As to quaternary structure, composed of six subunits; NqrA, NqrB, NqrC, NqrD, NqrE and NqrF.

The protein localises to the cell inner membrane. It catalyses the reaction a ubiquinone + n Na(+)(in) + NADH + H(+) = a ubiquinol + n Na(+)(out) + NAD(+). In terms of biological role, NQR complex catalyzes the reduction of ubiquinone-1 to ubiquinol by two successive reactions, coupled with the transport of Na(+) ions from the cytoplasm to the periplasm. NqrA to NqrE are probably involved in the second step, the conversion of ubisemiquinone to ubiquinol. This is Na(+)-translocating NADH-quinone reductase subunit D from Haemophilus ducreyi (strain 35000HP / ATCC 700724).